The following is a 395-amino-acid chain: MQRNNNFSKLETSYLFSSIRQKIRAFREAHPDVSIIDLSIGDTTQPLHTAVMDTFTKSVQKLGNPETYRGYGPELGLSTLREKLSEVFYQGKVSPEEIFISDGAKMDIFRLLSLFGPGKTIAVQDPSYPVYIDTALLAGAKKVIKLPCRKETDFFPVIPQGEEIDIFCLCSPNNPTGTVLTKEQLEELITYANSHGSIILFDAAYSAFISDPSLPKSIFEIPEARSCAIEINSFSKSLGFSGVRLGWNVVPKDLRYSNGLPIIDDWKRFLHTTFNGASLPVQEAAITGASLFPNLEAIAHYRHNSSLLREALQKAEFSVYGGEHAPYLWVEVPKILPDEDFFDFFLTQYHIAITPGKGFGACGKGYVRFSSLGKIEDIMAACQRLTLTSVYDRMV.

Substrate contacts are provided by Tyr-14 and Gly-41. Pyridoxal 5'-phosphate-binding positions include Tyr-71, Ala-104–Lys-105, Tyr-128, Asn-174, Tyr-205, and Ser-233–Ser-235. Lys-105, Tyr-128, and Asn-174 together coordinate substrate. Lys-236 bears the N6-(pyridoxal phosphate)lysine mark. Pyridoxal 5'-phosphate is bound by residues Arg-244 and Asn-275. Residues Asn-275 and Arg-368 each contribute to the substrate site.

The protein belongs to the class-I pyridoxal-phosphate-dependent aminotransferase family. LL-diaminopimelate aminotransferase subfamily. In terms of assembly, homodimer. The cofactor is pyridoxal 5'-phosphate.

The catalysed reaction is (2S,6S)-2,6-diaminopimelate + 2-oxoglutarate = (S)-2,3,4,5-tetrahydrodipicolinate + L-glutamate + H2O + H(+). Its pathway is amino-acid biosynthesis; L-lysine biosynthesis via DAP pathway; LL-2,6-diaminopimelate from (S)-tetrahydrodipicolinate (aminotransferase route): step 1/1. Functionally, involved in the synthesis of meso-diaminopimelate (m-DAP or DL-DAP), required for both lysine and peptidoglycan biosynthesis. Catalyzes the direct conversion of tetrahydrodipicolinate to LL-diaminopimelate. This is LL-diaminopimelate aminotransferase from Chlamydia caviae (strain ATCC VR-813 / DSM 19441 / 03DC25 / GPIC) (Chlamydophila caviae).